The sequence spans 79 residues: ATP synthase subunit c (79 aa).

2 helical membrane passes run 11-31 (IAVA…IGIL) and 53-73 (FFVV…LGLY).

Belongs to the ATPase C chain family. As to quaternary structure, F-type ATPases have 2 components, F(1) - the catalytic core - and F(0) - the membrane proton channel. F(1) has five subunits: alpha(3), beta(3), gamma(1), delta(1), epsilon(1). F(0) has three main subunits: a(1), b(2) and c(10-14). The alpha and beta chains form an alternating ring which encloses part of the gamma chain. F(1) is attached to F(0) by a central stalk formed by the gamma and epsilon chains, while a peripheral stalk is formed by the delta and b chains.

The protein resides in the cell membrane. Its function is as follows. F(1)F(0) ATP synthase produces ATP from ADP in the presence of a proton or sodium gradient. F-type ATPases consist of two structural domains, F(1) containing the extramembraneous catalytic core and F(0) containing the membrane proton channel, linked together by a central stalk and a peripheral stalk. During catalysis, ATP synthesis in the catalytic domain of F(1) is coupled via a rotary mechanism of the central stalk subunits to proton translocation. Key component of the F(0) channel; it plays a direct role in translocation across the membrane. A homomeric c-ring of between 10-14 subunits forms the central stalk rotor element with the F(1) delta and epsilon subunits. This chain is ATP synthase subunit c, found in Buchnera aphidicola subsp. Acyrthosiphon pisum (strain 5A).